The chain runs to 647 residues: DNA mismatch repair protein MutL (647 aa).

A disordered region spans residues 377–396; that stretch reads EEPQAVKQSAQLWQPPKQEW. Over residues 387–396 the composition is skewed to low complexity; sequence QLWQPPKQEW.

Belongs to the DNA mismatch repair MutL/HexB family.

In terms of biological role, this protein is involved in the repair of mismatches in DNA. It is required for dam-dependent methyl-directed DNA mismatch repair. May act as a 'molecular matchmaker', a protein that promotes the formation of a stable complex between two or more DNA-binding proteins in an ATP-dependent manner without itself being part of a final effector complex. In Bacillus cereus (strain AH187), this protein is DNA mismatch repair protein MutL.